The primary structure comprises 374 residues: Heat stress transcription factor A-8 (374 aa).

Residues 17–112 (VAPFLRKCYD…LLKNVIRRKN (96 aa)) mediate DNA binding. A hydrophobic repeat HR-A/B region spans residues 126-192 (TTYAQEKSGL…EMLSFLVMVM (67 aa)). Residues 285-294 (DGAWEKLLLL) carry the AHA1 motif. The Nuclear localization signal signature appears at 298–303 (RKKTKK). The AHA2 signature appears at 330-339 (KSYMLKLISE). Residues 363 to 370 (LTEQMELL) carry the Nuclear export signal motif.

The protein belongs to the HSF family. Class A subfamily. As to quaternary structure, homotrimer. Post-translationally, exhibits temperature-dependent phosphorylation.

Its subcellular location is the cytoplasm. It is found in the nucleus. Its function is as follows. Transcriptional activator that specifically binds DNA sequence 5'-AGAAnnTTCT-3' known as heat shock promoter elements (HSE). The chain is Heat stress transcription factor A-8 (HSFA8) from Arabidopsis thaliana (Mouse-ear cress).